Reading from the N-terminus, the 312-residue chain is Acetyl-coenzyme A carboxylase carboxyl transferase subunit alpha (312 aa).

In terms of domain architecture, CoA carboxyltransferase C-terminal spans 36–286 (NLEKEISKTY…ADYVKKSLNE (251 aa)).

It belongs to the AccA family. Acetyl-CoA carboxylase is a heterohexamer composed of biotin carboxyl carrier protein (AccB), biotin carboxylase (AccC) and two subunits each of ACCase subunit alpha (AccA) and ACCase subunit beta (AccD).

It localises to the cytoplasm. The catalysed reaction is N(6)-carboxybiotinyl-L-lysyl-[protein] + acetyl-CoA = N(6)-biotinyl-L-lysyl-[protein] + malonyl-CoA. The protein operates within lipid metabolism; malonyl-CoA biosynthesis; malonyl-CoA from acetyl-CoA: step 1/1. Component of the acetyl coenzyme A carboxylase (ACC) complex. First, biotin carboxylase catalyzes the carboxylation of biotin on its carrier protein (BCCP) and then the CO(2) group is transferred by the carboxyltransferase to acetyl-CoA to form malonyl-CoA. The protein is Acetyl-coenzyme A carboxylase carboxyl transferase subunit alpha of Campylobacter jejuni (strain RM1221).